The following is a 433-amino-acid chain: 3-phosphoshikimate 1-carboxyvinyltransferase (433 aa).

3-phosphoshikimate-binding residues include Lys23, Ser24, and Arg28. Residue Lys23 coordinates phosphoenolpyruvate. Residues Gly93 and Arg121 each contribute to the phosphoenolpyruvate site. Ser167, Gln169, Asp318, and Lys345 together coordinate 3-phosphoshikimate. Gln169 lines the phosphoenolpyruvate pocket. Asp318 functions as the Proton acceptor in the catalytic mechanism. Residues Arg349 and Arg390 each coordinate phosphoenolpyruvate.

This sequence belongs to the EPSP synthase family. Monomer.

Its subcellular location is the cytoplasm. The catalysed reaction is 3-phosphoshikimate + phosphoenolpyruvate = 5-O-(1-carboxyvinyl)-3-phosphoshikimate + phosphate. Its pathway is metabolic intermediate biosynthesis; chorismate biosynthesis; chorismate from D-erythrose 4-phosphate and phosphoenolpyruvate: step 6/7. In terms of biological role, catalyzes the transfer of the enolpyruvyl moiety of phosphoenolpyruvate (PEP) to the 5-hydroxyl of shikimate-3-phosphate (S3P) to produce enolpyruvyl shikimate-3-phosphate and inorganic phosphate. This chain is 3-phosphoshikimate 1-carboxyvinyltransferase, found in Nitratiruptor sp. (strain SB155-2).